We begin with the raw amino-acid sequence, 363 residues long: NADH-quinone oxidoreductase subunit H (363 aa).

10 consecutive transmembrane segments (helical) span residues V29 to W49, G62 to F82, A94 to V114, V127 to G147, V166 to S186, F202 to V222, I239 to L257, I264 to V286, L293 to A313, and F339 to I359.

Belongs to the complex I subunit 1 family. As to quaternary structure, NDH-1 is composed of 14 different subunits. Subunits NuoA, H, J, K, L, M, N constitute the membrane sector of the complex.

The protein resides in the cell inner membrane. It catalyses the reaction a quinone + NADH + 5 H(+)(in) = a quinol + NAD(+) + 4 H(+)(out). Functionally, NDH-1 shuttles electrons from NADH, via FMN and iron-sulfur (Fe-S) centers, to quinones in the respiratory chain. The immediate electron acceptor for the enzyme in this species is believed to be ubiquinone. Couples the redox reaction to proton translocation (for every two electrons transferred, four hydrogen ions are translocated across the cytoplasmic membrane), and thus conserves the redox energy in a proton gradient. This subunit may bind ubiquinone. The polypeptide is NADH-quinone oxidoreductase subunit H (Xylella fastidiosa (strain Temecula1 / ATCC 700964)).